Here is a 194-residue protein sequence, read N- to C-terminus: Molybdenum cofactor guanylyltransferase (194 aa).

Residues 12 to 14 (LAG), K25, N53, D71, and D101 contribute to the GTP site. D101 contacts Mg(2+).

Belongs to the MobA family. As to quaternary structure, monomer. Mg(2+) is required as a cofactor.

The protein localises to the cytoplasm. The catalysed reaction is Mo-molybdopterin + GTP + H(+) = Mo-molybdopterin guanine dinucleotide + diphosphate. In terms of biological role, transfers a GMP moiety from GTP to Mo-molybdopterin (Mo-MPT) cofactor (Moco or molybdenum cofactor) to form Mo-molybdopterin guanine dinucleotide (Mo-MGD) cofactor. This Escherichia coli O6:H1 (strain CFT073 / ATCC 700928 / UPEC) protein is Molybdenum cofactor guanylyltransferase.